Here is a 471-residue protein sequence, read N- to C-terminus: Desmin (471 aa).

Positions 2–109 (SQAYSSSQRV…QEFLTTRTNE (108 aa)) are head. S7 is subject to Phosphoserine; by CDK1. S12 is subject to Phosphoserine; by AURKB. R16 carries the omega-N-methylarginine modification. T17 carries the post-translational modification Phosphothreonine; by AURKB and ROCK1. S28 is subject to Phosphoserine; by CDK1. S31 carries the post-translational modification Phosphoserine. Position 32 is a phosphoserine; by CDK1 (S32). R37 carries the post-translational modification Asymmetric dimethylarginine; alternate. R37 carries the omega-N-methylarginine; alternate modification. At S45 the chain carries Phosphoserine. ADP-ribosylarginine is present on R58. S60 carries the post-translational modification Phosphoserine; by AURKB. At R70 the chain carries Omega-N-methylarginine. At T77 the chain carries Phosphothreonine; by ROCK1. Phosphoserine is present on S81. The region spanning 109–417 (EKVELQELND…KLLEGEESRI (309 aa)) is the IF rod domain. Positions 110 to 142 (KVELQELNDRFANYIEKVRFLEQQNAALAAEVN) are coil 1A. Residues 143–152 (RLKGREPTRV) are linker 1. Positions 153–253 (AEIYEEELRE…HEEEIRELQA (101 aa)) are coil 1B. A linker 12 region spans residues 254-269 (QLQEQQVQVEMDMSKP). The interval 269-416 (PDLTAALRDI…RKLLEGEESR (148 aa)) is interaction with NEB. The tract at residues 270 to 288 (DLTAALRDIRAQYETIAAK) is coil 2A. Residues 289-296 (NISEAEEW) form a linker 2 region. S291, S359, S362, and S425 each carry phosphoserine. Positions 297–413 (YKSKVSDLTQ…ATYRKLLEGE (117 aa)) are coil 2B. A tail region spans residues 414-471 (ESRINLPIQTFSALNFRETSPEQRGSEVHTKKTVMIKTIETRDGEVVSEATQQQHEVL). Residues 439-454 (SEVHTKKTVMIKTIET) form an interaction with CRYAB region.

Belongs to the intermediate filament family. In terms of assembly, homomer. Interacts with DST. Interacts with MTM1. Interacts with EPPK1; interaction is dependent of higher-order structure of intermediate filament. Interacts with CRYAB. Interacts with NEB (via nebulin repeats 160-164). Interacts (via rod region) with NEBL (via nebulin repeats 1-5). Interacts with ASB2; the interaction targets DES for proteasomal degradation. Interacts with PKP1. Interacts with FLII. In terms of processing, ADP-ribosylation prevents ability to form intermediate filaments. Phosphorylation at Ser-7, Ser-28 and Ser-32 by CDK1 and phosphorylation at Ser-60 by AURKB contribute to efficient separation of desmin intermediate filaments during mitosis. Post-translationally, ubiquitination by a SCF-like complex containing ASB2 leads to proteasomal degradation.

The protein localises to the cytoplasm. The protein resides in the myofibril. It is found in the sarcomere. Its subcellular location is the z line. It localises to the cell membrane. The protein localises to the sarcolemma. The protein resides in the nucleus. It is found in the cell tip. Its subcellular location is the nucleus envelope. Functionally, muscle-specific type III intermediate filament essential for proper muscular structure and function. Plays a crucial role in maintaining the structure of sarcomeres, inter-connecting the Z-disks and forming the myofibrils, linking them not only to the sarcolemmal cytoskeleton, but also to the nucleus and mitochondria, thus providing strength for the muscle fiber during activity. In adult striated muscle they form a fibrous network connecting myofibrils to each other and to the plasma membrane from the periphery of the Z-line structures. May act as a sarcomeric microtubule-anchoring protein: specifically associates with detyrosinated tubulin-alpha chains, leading to buckled microtubules and mechanical resistance to contraction. Required for nuclear membrane integrity, via anchoring at the cell tip and nuclear envelope, resulting in maintenance of microtubule-derived intracellular mechanical forces. Contributes to the transcriptional regulation of the NKX2-5 gene in cardiac progenitor cells during a short period of cardiomyogenesis and in cardiac side population stem cells in the adult. Plays a role in maintaining an optimal conformation of nebulette (NEB) on heart muscle sarcomeres to bind and recruit cardiac alpha-actin. This Sus scrofa (Pig) protein is Desmin (DES).